The primary structure comprises 238 residues: Probable transcriptional regulatory protein SERP0322 (238 aa).

Belongs to the TACO1 family. YeeN subfamily.

The protein resides in the cytoplasm. The protein is Probable transcriptional regulatory protein SERP0322 of Staphylococcus epidermidis (strain ATCC 35984 / DSM 28319 / BCRC 17069 / CCUG 31568 / BM 3577 / RP62A).